A 745-amino-acid chain; its full sequence is Copper-exporting P-type ATPase B (745 aa).

The disordered stretch occupies residues 1-76 (MNNGIDPENE…GMDHSHMDHE (76 aa)). Over 1–108 (MNNGIDPENE…HMGNFKQKFW (108 aa)) the chain is Cytoplasmic. The span at 36-76 (LQEHGKMENMDQHHTHGHMERHQQMDHGHMSGMDHSHMDHE) shows a compositional bias: basic and acidic residues. A run of 3 repeats spans residues 60-71 (MDHGHMSGMDHS), 73-84 (MDHEDMSGMNHS), and 86-97 (MGHENMSGMDHS). The interval 60–97 (MDHGHMSGMDHSHMDHEDMSGMNHSHMGHENMSGMDHS) is 3 X 12 AA approximate repeats. The helical transmembrane segment at 109 to 128 (LSLILAIPIILFSPMMGMSF) threads the bilayer. The Extracellular segment spans residues 129-139 (PFQVTFPGSNW). The helical transmembrane segment at 140–160 (VVLVLATILFIYGGQPFLSGA) threads the bilayer. At 161 to 170 (KMELKQKSPA) the chain is on the cytoplasmic side. The chain crosses the membrane as a helical span at residues 171 to 191 (MMTLIAMGITVAYVYSVYSFI). Residues 192 to 200 (ANLINPHTH) lie on the Extracellular side of the membrane. The chain crosses the membrane as a helical span at residues 201-217 (VMDFFWELATLIVIMLL). Over 218–359 (GHWIEMNAVS…EFLSDKVAKW (142 aa)) the chain is Cytoplasmic. A helical transmembrane segment spans residues 360–379 (LFYVALVVGIIAFIAWLFLA). Residues 380–388 (NLPDALERM) lie on the Extracellular side of the membrane. A helical membrane pass occupies residues 389-409 (VTVFIIACPHALGLAIPLVVA). Residues 410-703 (RSTSIAAKNG…QNLWWGAGYN (294 aa)) lie on the Cytoplasmic side of the membrane. Asp-440 functions as the 4-aspartylphosphate intermediate in the catalytic mechanism. Mg(2+) contacts are provided by Asp-638 and Asp-642. A helical membrane pass occupies residues 704–721 (IIAIPLAAGILAPIGLIL). Residues 722–723 (SP) lie on the Extracellular side of the membrane. A helical transmembrane segment spans residues 724-744 (AVGAVLMSLSTVVVALNALTL). Lys-745 is a topological domain (cytoplasmic).

It belongs to the cation transport ATPase (P-type) (TC 3.A.3) family. Type IB subfamily. Monomer.

The protein localises to the cell membrane. The enzyme catalyses Cu(+)(in) + ATP + H2O = Cu(+)(out) + ADP + phosphate + H(+). Inhibited by vanadate. Involved in copper export. Can also export silver. The polypeptide is Copper-exporting P-type ATPase B (copB) (Enterococcus hirae (strain ATCC 9790 / DSM 20160 / JCM 8729 / LMG 6399 / NBRC 3181 / NCIMB 6459 / NCDO 1258 / NCTC 12367 / WDCM 00089 / R)).